We begin with the raw amino-acid sequence, 264 residues long: Thymidylate synthase (264 aa).

Arg-21 contacts dUMP. A (6R)-5,10-methylene-5,6,7,8-tetrahydrofolate-binding site is contributed by His-51. Arg-126–Arg-127 is a dUMP binding site. The active-site Nucleophile is the Cys-146. Residues Arg-166–Asp-169, Asn-177, and His-207–Tyr-209 each bind dUMP. Position 169 (Asp-169) interacts with (6R)-5,10-methylene-5,6,7,8-tetrahydrofolate. Ala-263 contributes to the (6R)-5,10-methylene-5,6,7,8-tetrahydrofolate binding site.

This sequence belongs to the thymidylate synthase family. Bacterial-type ThyA subfamily. Homodimer.

It is found in the cytoplasm. The catalysed reaction is dUMP + (6R)-5,10-methylene-5,6,7,8-tetrahydrofolate = 7,8-dihydrofolate + dTMP. The protein operates within pyrimidine metabolism; dTTP biosynthesis. Functionally, catalyzes the reductive methylation of 2'-deoxyuridine-5'-monophosphate (dUMP) to 2'-deoxythymidine-5'-monophosphate (dTMP) while utilizing 5,10-methylenetetrahydrofolate (mTHF) as the methyl donor and reductant in the reaction, yielding dihydrofolate (DHF) as a by-product. This enzymatic reaction provides an intracellular de novo source of dTMP, an essential precursor for DNA biosynthesis. The chain is Thymidylate synthase from Dechloromonas aromatica (strain RCB).